Here is a 142-residue protein sequence, read N- to C-terminus: Midkine-A (142 aa).

A signal peptide spans M1 to Q20. Disulfide bonds link C36-C60, C44-C69, C51-C73, C83-C115, and C93-C125.

It belongs to the pleiotrophin family. Expression at the mid-gastrula stage begins in the neural anlage, and becomes increasingly prominent in the central nervous system and head mesenchyme during neurula stages. Although the mRNA is localized to the developing central nervous system (CNS), the protein is deposited at the neuromuscular junction (NMJ). In the tailbud stage embryo, expressed in the head and tail regions as well as in the CNS. In adults, expression is highest in the brain, eye and bone, with lower expression in the heart and lung. Not expressed in the ovary.

It localises to the secreted. Secreted protein that functions as a cytokine and growth factor and mediates its signal through cell-surface proteoglycan and non-proteoglycan receptors. Binds cell-surface proteoglycan receptors via their chondroitin sulfate (CS) groups. Thereby regulates many processes like inflammatory response, cell proliferation, cell adhesion, cell growth, cell survival, tissue regeneration, cell differentiation and cell migration. Inhibits mesoderm formation and promotes neural formation during development. Plays a role in development of the neuromuscular junction (NMJ). Has antibacterial activity against both Gram-positive and Gram-negative bacteria. This is Midkine-A (mdk-a) from Xenopus laevis (African clawed frog).